The following is a 254-amino-acid chain: Leucyl/phenylalanyl-tRNA--protein transferase (254 aa).

This sequence belongs to the L/F-transferase family.

Its subcellular location is the cytoplasm. The enzyme catalyses N-terminal L-lysyl-[protein] + L-leucyl-tRNA(Leu) = N-terminal L-leucyl-L-lysyl-[protein] + tRNA(Leu) + H(+). It carries out the reaction N-terminal L-arginyl-[protein] + L-leucyl-tRNA(Leu) = N-terminal L-leucyl-L-arginyl-[protein] + tRNA(Leu) + H(+). The catalysed reaction is L-phenylalanyl-tRNA(Phe) + an N-terminal L-alpha-aminoacyl-[protein] = an N-terminal L-phenylalanyl-L-alpha-aminoacyl-[protein] + tRNA(Phe). Functionally, functions in the N-end rule pathway of protein degradation where it conjugates Leu, Phe and, less efficiently, Met from aminoacyl-tRNAs to the N-termini of proteins containing an N-terminal arginine or lysine. The polypeptide is Leucyl/phenylalanyl-tRNA--protein transferase (Burkholderia multivorans (strain ATCC 17616 / 249)).